The chain runs to 204 residues: Peptide deformylase (204 aa).

2 residues coordinate Fe cation: cysteine 131 and histidine 174. Residue glutamate 175 is part of the active site. Histidine 178 contributes to the Fe cation binding site.

It belongs to the polypeptide deformylase family. Requires Fe(2+) as cofactor.

It catalyses the reaction N-terminal N-formyl-L-methionyl-[peptide] + H2O = N-terminal L-methionyl-[peptide] + formate. Removes the formyl group from the N-terminal Met of newly synthesized proteins. Requires at least a dipeptide for an efficient rate of reaction. N-terminal L-methionine is a prerequisite for activity but the enzyme has broad specificity at other positions. This chain is Peptide deformylase, found in Streptococcus thermophilus (strain CNRZ 1066).